The primary structure comprises 202 residues: CASP-like protein 2B1 (202 aa).

Residues 1–29 lie on the Cytoplasmic side of the membrane; that stretch reads MSYLGVGVSPGNVPVYHGSNLKVIDKRVR. A helical membrane pass occupies residues 30–50; the sequence is LAELVLRCLICGLGVLAAVLV. At 51–72 the chain is on the extracellular side; it reads GTDTQVKEIFSIQKKARFTDMK. The helical transmembrane segment at 73–93 threads the bilayer; the sequence is ALVFLVIANGIAAAYSLLQGV. The Cytoplasmic segment spans residues 94 to 109; the sequence is RCVVGMVRGSALFSKP. A helical membrane pass occupies residues 110-130; the sequence is LAWAIFSGDQMMAYLTVAAVA. Over 131–164 the chain is Extracellular; the sequence is AAAQSAVFAKLGQPELQWMKICNMYGKFCNQVGE. Residues 165-185 traverse the membrane as a helical segment; that stretch reads GIASALLVSVSMVVLSCISAF. Residues 186–202 are Cytoplasmic-facing; that stretch reads SLFRLYGANKGKDCTRW.

Belongs to the Casparian strip membrane proteins (CASP) family. In terms of assembly, homodimer and heterodimers.

It is found in the cell membrane. This Ricinus communis (Castor bean) protein is CASP-like protein 2B1.